The primary structure comprises 110 residues: Large ribosomal subunit protein uL22 (110 aa).

Belongs to the universal ribosomal protein uL22 family. Part of the 50S ribosomal subunit.

Its function is as follows. This protein binds specifically to 23S rRNA; its binding is stimulated by other ribosomal proteins, e.g. L4, L17, and L20. It is important during the early stages of 50S assembly. It makes multiple contacts with different domains of the 23S rRNA in the assembled 50S subunit and ribosome. Functionally, the globular domain of the protein is located near the polypeptide exit tunnel on the outside of the subunit, while an extended beta-hairpin is found that lines the wall of the exit tunnel in the center of the 70S ribosome. The protein is Large ribosomal subunit protein uL22 of Janthinobacterium sp. (strain Marseille) (Minibacterium massiliensis).